The chain runs to 77 residues: Acyl carrier protein (77 aa).

Residues 1-76 (MSLEDDVKAI…DVIKYIQERQ (76 aa)) enclose the Carrier domain. Serine 36 is subject to O-(pantetheine 4'-phosphoryl)serine.

It belongs to the acyl carrier protein (ACP) family. In terms of processing, 4'-phosphopantetheine is transferred from CoA to a specific serine of apo-ACP by AcpS. This modification is essential for activity because fatty acids are bound in thioester linkage to the sulfhydryl of the prosthetic group.

Its subcellular location is the cytoplasm. It participates in lipid metabolism; fatty acid biosynthesis. Its function is as follows. Carrier of the growing fatty acid chain in fatty acid biosynthesis. This Chlamydia trachomatis serovar A (strain ATCC VR-571B / DSM 19440 / HAR-13) protein is Acyl carrier protein.